The chain runs to 990 residues: Bacteriophage adsorption protein A (990 aa).

The N-terminal stretch at 1–27 is a signal peptide; it reads MKENNLNRVIGWSGLLLTSLLSTSALA. 3 TPR repeats span residues 81-114, 612-645, and 646-679; these read IPLT…HPGD, ANAY…EPNN, and SNTQ…LPDD.

As to quaternary structure, (Microbial infection) Interacts with N4 phage non-contractile sheath protein; this interaction is essential for viral adsorption to the host.

The protein resides in the cell outer membrane. In terms of biological role, (Microbial infection) Allows N4 phage attachment by binding to the viral non-contractile sheath protein. The sequence is that of Bacteriophage adsorption protein A (nfrA) from Escherichia coli (strain K12).